Here is an 891-residue protein sequence, read N- to C-terminus: Major core protein 4a precursor (891 aa).

Belongs to the poxviridae protein P4a family. In terms of assembly, interacts with P39/A4.

Its subcellular location is the virion. Core protein 4a is the most abundant virion protein. Major component of the virion core that undergoes proteolytic processing during the immature virion (IV) to mature virion (MV) transition. The sequence is that of Major core protein 4a precursor from Fowlpox virus (strain NVSL) (FPV).